A 182-amino-acid polypeptide reads, in one-letter code: MNLPDNFWNKVSEFEIILKQFNKIHSLTNYRDIKPVVEDSMKPLEFLDFNPKIVIDVGSGAGFPAIFLSLILNSSEFHLYEPIAKKSSFLSYVGAALNLKNITVHPSKIESCQKIKADLITSRALSKTLFLIEICRGFYDENTTFLLYKGDGAKEEISNLKCKNSIISSGKRNYLFLKGVKC.

Residues Gly58, Phe63, Ile109–Glu110, and Arg123 contribute to the S-adenosyl-L-methionine site.

Belongs to the methyltransferase superfamily. RNA methyltransferase RsmG family.

Its subcellular location is the cytoplasm. It catalyses the reaction guanosine(527) in 16S rRNA + S-adenosyl-L-methionine = N(7)-methylguanosine(527) in 16S rRNA + S-adenosyl-L-homocysteine. Functionally, specifically methylates the N7 position of guanine in position 527 of 16S rRNA. In Campylobacter fetus subsp. fetus (strain 82-40), this protein is Ribosomal RNA small subunit methyltransferase G.